The chain runs to 122 residues: Large ribosomal subunit protein uL14 (122 aa).

It belongs to the universal ribosomal protein uL14 family. As to quaternary structure, part of the 50S ribosomal subunit. Forms a cluster with proteins L3 and L19. In the 70S ribosome, L14 and L19 interact and together make contacts with the 16S rRNA in bridges B5 and B8.

Functionally, binds to 23S rRNA. Forms part of two intersubunit bridges in the 70S ribosome. The sequence is that of Large ribosomal subunit protein uL14 from Halothermothrix orenii (strain H 168 / OCM 544 / DSM 9562).